The chain runs to 500 residues: Probable trehalose-phosphate phosphatase 8 (500 aa).

It belongs to the trehalose phosphatase family. The cofactor is a divalent metal cation.

It catalyses the reaction alpha,alpha-trehalose 6-phosphate + H2O = alpha,alpha-trehalose + phosphate. It participates in glycan biosynthesis; trehalose biosynthesis. In terms of biological role, removes the phosphate from trehalose 6-phosphate to produce free trehalose. Trehalose accumulation in plant may improve abiotic stress tolerance. The chain is Probable trehalose-phosphate phosphatase 8 (TPP8) from Oryza sativa subsp. japonica (Rice).